Reading from the N-terminus, the 336-residue chain is Galactose/methyl galactoside import permease protein MglC (336 aa).

Transmembrane regions (helical) follow at residues 17 to 37, 53 to 73, 107 to 127, 128 to 148, 181 to 201, 227 to 247, 257 to 277, 279 to 299, and 306 to 326; these read GIYV…PTFL, IIIA…LSAG, LVIL…GIII, AYLN…VYGI, FRLS…WVLW, VALN…FGGL, TNNL…VGGV, FSGG…FTVI, and IGVN…FAVA.

The protein belongs to the binding-protein-dependent transport system permease family. AraH/RbsC subfamily. The complex is composed of one ATP-binding protein (MglA), two transmembrane proteins (MglC) and a solute-binding protein (MglB).

Its subcellular location is the cell inner membrane. Part of the ABC transporter complex MglABC involved in galactose/methyl galactoside import. Probably responsible for the translocation of the substrate across the membrane. This chain is Galactose/methyl galactoside import permease protein MglC (mglC), found in Salmonella typhimurium (strain LT2 / SGSC1412 / ATCC 700720).